The primary structure comprises 374 residues: UPF0754 membrane protein SAS1767 (374 aa).

The next 2 helical transmembrane spans lie at 4 to 24 (LFII…TNVI) and 354 to 374 (SLGF…AIFV).

This sequence belongs to the UPF0754 family.

The protein resides in the cell membrane. In Staphylococcus aureus (strain MSSA476), this protein is UPF0754 membrane protein SAS1767.